The primary structure comprises 361 residues: Phospho-N-acetylmuramoyl-pentapeptide-transferase (361 aa).

10 helical membrane passes run 28 to 48, 74 to 94, 99 to 119, 133 to 153, 168 to 188, 203 to 223, 236 to 256, 263 to 283, 288 to 308, and 338 to 358; these read LAIIITLSLSFITGPILIKFL, TMGGIMIILSSCLSTLLLADL, IWITLFGFISFGIIGFMDDYA, SKLLLQGIISFIICVLLEYLD, LSLDLGYFYIVFAMFVIVGSS, VPIAFTAGSFALISYLVGNLI, TGELTVLCAGLVGSCLGFLWF, VFMGDTGSLSLGGVLGIISVI, IVLAIVGGLFVIETTSVILQV, and KVVIRFWIISVIFALIGLSSL.

This sequence belongs to the glycosyltransferase 4 family. MraY subfamily. Requires Mg(2+) as cofactor.

The protein localises to the cell membrane. It carries out the reaction UDP-N-acetyl-alpha-D-muramoyl-L-alanyl-gamma-D-glutamyl-meso-2,6-diaminopimeloyl-D-alanyl-D-alanine + di-trans,octa-cis-undecaprenyl phosphate = di-trans,octa-cis-undecaprenyl diphospho-N-acetyl-alpha-D-muramoyl-L-alanyl-D-glutamyl-meso-2,6-diaminopimeloyl-D-alanyl-D-alanine + UMP. It functions in the pathway cell wall biogenesis; peptidoglycan biosynthesis. In terms of biological role, catalyzes the initial step of the lipid cycle reactions in the biosynthesis of the cell wall peptidoglycan: transfers peptidoglycan precursor phospho-MurNAc-pentapeptide from UDP-MurNAc-pentapeptide onto the lipid carrier undecaprenyl phosphate, yielding undecaprenyl-pyrophosphoryl-MurNAc-pentapeptide, known as lipid I. The protein is Phospho-N-acetylmuramoyl-pentapeptide-transferase of Rickettsia montanensis.